The primary structure comprises 668 residues: Metal reductase (668 aa).

Residues 23–25 (PMH), Gly57, Gln98, Arg216, Arg290, and 312–313 (AR) contribute to the FMN site. [4Fe-4S] cluster contacts are provided by Cys336 and Cys339. FAD is bound at residue Gln341. [4Fe-4S] cluster-binding residues include Cys343 and Cys355. 5 residues coordinate FAD: Ala386, Glu405, Gln413, Arg423, and Ala450.

It in the N-terminal section; belongs to the NADH:flavin oxidoreductase/NADH oxidase family. In terms of assembly, homotetramer. FMN serves as cofactor. It depends on FAD as a cofactor. [4Fe-4S] cluster is required as a cofactor.

It localises to the cytoplasm. In terms of biological role, metal reductase able to reduce Fe(III)-chelates to Fe(II)-chelates, as well as soluble Cr(VI) and U(VI), using NADH as electron donor. Cannot use NADPH as an electron donor. Is unable to reduce riboflavin and FMN with NADH as electron donor. May have an in vivo role in metal reduction in D.reducens, which is an organism capable of reducing contaminant heavy metals and radionuclides. The chain is Metal reductase from Desulforamulus reducens (strain ATCC BAA-1160 / DSM 100696 / MI-1) (Desulfotomaculum reducens).